Consider the following 137-residue polypeptide: Large ribosomal subunit protein uL16 (137 aa).

The protein belongs to the universal ribosomal protein uL16 family. In terms of assembly, part of the 50S ribosomal subunit.

Functionally, binds 23S rRNA and is also seen to make contacts with the A and possibly P site tRNAs. This is Large ribosomal subunit protein uL16 from Roseobacter denitrificans (strain ATCC 33942 / OCh 114) (Erythrobacter sp. (strain OCh 114)).